The sequence spans 164 residues: MDITKHLKPNLVDPNIEESIIKKLKPPVEDYWAPTKSGLHKFYHNFIRPNIYLIIFIIIVLLLLYYRYRRVKADKEKEKLEDTDKEFDKSTNNDTNSKKIYHRQKNSKTLNSSKKQSIDDTELLLQLYNLNKENLREPPITKSNFAYPMYPYHKGGTLISPGSR.

A helical membrane pass occupies residues 46–66 (FIRPNIYLIIFIIIVLLLLYY). A coiled-coil region spans residues 72-137 (KADKEKEKLE…YNLNKENLRE (66 aa)). Basic and acidic residues predominate over residues 76–91 (EKEKLEDTDKEFDKST). Residues 76–114 (EKEKLEDTDKEFDKSTNNDTNSKKIYHRQKNSKTLNSSK) form a disordered region.

It localises to the membrane. This is an uncharacterized protein from Acanthamoeba polyphaga mimivirus (APMV).